Here is a 301-residue protein sequence, read N- to C-terminus: Large ribosomal subunit protein uL18 (301 aa).

The segment covering 257 to 271 has biased composition (basic and acidic residues); that stretch reads NPERVKSTKKNDKPK. The interval 257–283 is disordered; sequence NPERVKSTKKNDKPKRDHKKFYPTKLT.

It belongs to the universal ribosomal protein uL18 family. In terms of assembly, component of the large ribosomal subunit (LSU).

The protein localises to the cytoplasm. It localises to the nucleus. Its function is as follows. Component of the ribosome, a large ribonucleoprotein complex responsible for the synthesis of proteins in the cell. The small ribosomal subunit (SSU) binds messenger RNAs (mRNAs) and translates the encoded message by selecting cognate aminoacyl-transfer RNA (tRNA) molecules. The large subunit (LSU) contains the ribosomal catalytic site termed the peptidyl transferase center (PTC), which catalyzes the formation of peptide bonds, thereby polymerizing the amino acids delivered by tRNAs into a polypeptide chain. The nascent polypeptides leave the ribosome through a tunnel in the LSU and interact with protein factors that function in enzymatic processing, targeting, and the membrane insertion of nascent chains at the exit of the ribosomal tunnel. This Tetrahymena thermophila (strain SB210) protein is Large ribosomal subunit protein uL18 (RPL5).